The chain runs to 1363 residues: Homeobox protein 13 (1363 aa).

The stretch at 15-73 (FVMEQIQQQQQQQQQQQQQQQQQQQQQQQQQQQQLQQQQQQQQQQQQQQQQQQQQQQQN) forms a coiled coil. Disordered stretches follow at residues 66–96 (QQQQ…STVP), 120–177 (SQHA…INGS), 308–437 (INGT…YHGG), 621–731 (LNSP…QHQQ), 765–818 (HHHH…PQHS), 857–911 (SINS…SNSI), 1001–1137 (QNYN…TLIN), 1166–1202 (NFIN…KRMR), and 1270–1341 (ISFG…TLIS). The segment covering 73 to 96 (NPKMNNQPNETRLPSPPLLNSTVP) has biased composition (polar residues). A compositionally biased stretch (low complexity) spans 132 to 147 (SLNSSNNNNNNNFNNS). Residues 148 to 158 (RPTFSSCSGNS) show a composition bias toward polar residues. Composition is skewed to low complexity over residues 159-177 (NNTT…INGS) and 315-326 (SNHSNNNNNNNN). Residues 327–339 (NHHHHHHHHHQKR) show a composition bias toward basic residues. Positions 348–378 (TNHLTPLPLLHKHTNNNNNINNNNNHNHNNI) are enriched in low complexity. Over residues 379-393 (LGSPNQLNRSQDFTS) the composition is skewed to polar residues. Low complexity-rich tracts occupy residues 394–408 (KNNN…NNKI), 415–426 (NKGSPNQNSSEN), 641–693 (NNNS…NNNI), 709–731 (HHQQ…QHQQ), and 770–793 (QQQQ…SNHN). A coiled-coil region spans residues 738–789 (QQQLQIQYQQQQTHNNNLNQTQQLYYNHHHHQQQQQQQQQQQQHNNNNNNNN). Composition is skewed to polar residues over residues 794 to 818 (SVLT…PQHS) and 857 to 883 (SINS…QKNR). 3 stretches are compositionally biased toward low complexity: residues 889-911 (ILNS…SNSI), 1001-1031 (QNYN…NNNF), and 1045-1063 (NINN…NNNN). The span at 1064–1078 (KNDKNESEFESKEKL) shows a compositional bias: basic and acidic residues. Residues 1081–1095 (PFGSSIPNIVNNEQL) show a composition bias toward polar residues. 3 stretches are compositionally biased toward low complexity: residues 1096–1116 (SPYS…PQWS), 1123–1137 (TSSS…TLIN), and 1166–1177 (NFINNNSNNNNN). The span at 1179 to 1195 (EIDDDDEDGIDGIEGED) shows a compositional bias: acidic residues. The homeobox DNA-binding region spans 1198 to 1261 (KKRMRKTTRP…NRRTKDKLKN (64 aa)). Residues 1275 to 1294 (SSTSSTQTSTNSPSSQLSPL) show a composition bias toward low complexity. Over residues 1297–1316 (NMNNNDQQSISTPSLILSQI) the composition is skewed to polar residues. Residues 1317 to 1334 (NNNQNNNQNNNNNNNTNN) are compositionally biased toward low complexity.

It is found in the nucleus. Putative transcription factor. In Dictyostelium discoideum (Social amoeba), this protein is Homeobox protein 13 (hbx13).